Reading from the N-terminus, the 403-residue chain is Large ribosomal subunit protein uL3 (403 aa).

The segment at 1–37 is disordered; the sequence is MSHRKFSAPRHGSLGFLPRKRSSRHRGKVKSFPKDDP. Position 13 is a phosphoserine (Ser-13). The span at 18 to 31 shows a compositional bias: basic residues; that stretch reads PRKRSSRHRGKVKS. Lys-39 participates in a covalent cross-link: Glycyl lysine isopeptide (Lys-Gly) (interchain with G-Cter in SUMO2). Position 136 is an N6-acetyllysine (Lys-136). Glycyl lysine isopeptide (Lys-Gly) (interchain with G-Cter in SUMO2) cross-links involve residues Lys-224 and Lys-226. His-245 is modified (tele-methylhistidine). 2 positions are modified to N6-acetyllysine; alternate: Lys-286 and Lys-294. Residue Lys-286 forms a Glycyl lysine isopeptide (Lys-Gly) (interchain with G-Cter in SUMO2); alternate linkage. Lys-294 participates in a covalent cross-link: Glycyl lysine isopeptide (Lys-Gly) (interchain with G-Cter in SUMO1); alternate. Phosphoserine is present on Ser-304. At Lys-366 the chain carries N6-acetyllysine; alternate. Lys-366 is covalently cross-linked (Glycyl lysine isopeptide (Lys-Gly) (interchain with G-Cter in SUMO2); alternate). Lys-373 carries the N6-acetyllysine modification. Glycyl lysine isopeptide (Lys-Gly) (interchain with G-Cter in SUMO2) cross-links involve residues Lys-386, Lys-393, and Lys-399.

It belongs to the universal ribosomal protein uL3 family. Component of the large ribosomal subunit. Interacts with DHX33. In terms of processing, constitutively monomethylated at His-245 by METTL18. Methylation at His-245 regulates translation elongation by slowing ribosome traversal on tyrosine codons: slower elongation provides enough time for proper folding of synthesized proteins and prevents cellular aggregation of tyrosine-rich proteins It is not required for incorporation of RPL3 into ribosomes.

Its subcellular location is the nucleus. The protein localises to the nucleolus. It is found in the cytoplasm. Functionally, component of the large ribosomal subunit. The ribosome is a large ribonucleoprotein complex responsible for the synthesis of proteins in the cell. This Macaca fascicularis (Crab-eating macaque) protein is Large ribosomal subunit protein uL3 (RPL3).